Reading from the N-terminus, the 190-residue chain is Xanthine phosphoribosyltransferase (190 aa).

Positions 20 and 27 each coordinate xanthine. 129-133 (ANGRA) provides a ligand contact to 5-phospho-alpha-D-ribose 1-diphosphate. Xanthine is bound at residue Lys157.

This sequence belongs to the purine/pyrimidine phosphoribosyltransferase family. Xpt subfamily. Homodimer.

The protein localises to the cytoplasm. The catalysed reaction is XMP + diphosphate = xanthine + 5-phospho-alpha-D-ribose 1-diphosphate. Its pathway is purine metabolism; XMP biosynthesis via salvage pathway; XMP from xanthine: step 1/1. In terms of biological role, converts the preformed base xanthine, a product of nucleic acid breakdown, to xanthosine 5'-monophosphate (XMP), so it can be reused for RNA or DNA synthesis. This is Xanthine phosphoribosyltransferase from Clostridioides difficile (strain 630) (Peptoclostridium difficile).